The primary structure comprises 358 residues: MIFMEIETFLKKSLKNKIDFDDALYLYNNFSAIDLLYLAFKIKNRIKNNSKIKLCAIINAKSGKCKEDCIFCSQSIYSKCNIPIYPLKSKKEILEYAKKIIDECSKISSSIERGTLIGAESPNLMDVGYPNRGFPLWVERFSIVTSGKKINDDEFIEIVEAIELIKEETNLKVCCSLGLLDREKLKELKKLDVRIHNNLEASKNYFKNICSTHSYEDKVKVIKEAKKLDLEVCSGGIFGLGESVEERIKMAFELKELGVDSVPINILHPIEGTKAYEKIKNGEIKPISVSDALKLIALYKIIMPYAEIRLAGGRIYNLRDFQSYALMVLDGLMVGNYLTTKGRCLEDDLKMIADFHSL.

Positions 47–306 (KNNSKIKLCA…ALYKIIMPYA (260 aa)) constitute a Radical SAM core domain. [4Fe-4S] cluster is bound by residues cysteine 65, cysteine 69, and cysteine 72. Residues serine 142, cysteine 174, cysteine 233, and arginine 309 each contribute to the [2Fe-2S] cluster site.

Belongs to the radical SAM superfamily. Biotin synthase family. Homodimer. The cofactor is [4Fe-4S] cluster. [2Fe-2S] cluster is required as a cofactor.

It catalyses the reaction (4R,5S)-dethiobiotin + (sulfur carrier)-SH + 2 reduced [2Fe-2S]-[ferredoxin] + 2 S-adenosyl-L-methionine = (sulfur carrier)-H + biotin + 2 5'-deoxyadenosine + 2 L-methionine + 2 oxidized [2Fe-2S]-[ferredoxin]. It participates in cofactor biosynthesis; biotin biosynthesis; biotin from 7,8-diaminononanoate: step 2/2. Its function is as follows. Catalyzes the conversion of dethiobiotin (DTB) to biotin by the insertion of a sulfur atom into dethiobiotin via a radical-based mechanism. In Methanocaldococcus jannaschii (strain ATCC 43067 / DSM 2661 / JAL-1 / JCM 10045 / NBRC 100440) (Methanococcus jannaschii), this protein is Biotin synthase.